Consider the following 490-residue polypeptide: Delta(14)-sterol reductase (490 aa).

7 helical membrane-spanning segments follow: residues 23–43 (FGGP…VHVF), 80–100 (VFGL…ALSL), 136–156 (LAIL…WTFI), 160–180 (FAQI…FVYV), 230–250 (EFME…AFIA), 255–275 (LYGY…FYVF), and 324–344 (QLGA…YSIF). Residues Lys351, Arg355, Ile378, Trp383, and 390-391 (NY) each bind NADP(+). The helical transmembrane segment at 436 to 456 (ARGWGIVFTYFYILYFAILLI) threads the bilayer. NADP(+) is bound by residues Asp462, 466 to 470 (CSKKY), and Tyr477.

The protein belongs to the ERG4/ERG24 family.

Its subcellular location is the membrane. It carries out the reaction 4,4-dimethyl-5alpha-cholesta-8,24-dien-3beta-ol + NADP(+) = 4,4-dimethyl-5alpha-cholesta-8,14,24-trien-3beta-ol + NADPH + H(+). The protein operates within steroid biosynthesis; zymosterol biosynthesis; zymosterol from lanosterol: step 2/6. Functionally, reduces the C14=C15 double bond of 4,4-dimethyl-cholesta-8,14,24-trienol to produce 4,4-dimethyl-cholesta-8,24-dienol. The sequence is that of Delta(14)-sterol reductase (erg-3) from Neurospora crassa (strain ATCC 24698 / 74-OR23-1A / CBS 708.71 / DSM 1257 / FGSC 987).